Consider the following 112-residue polypeptide: T cell receptor alpha variable 12-1 (112 aa).

A signal peptide spans 1 to 20 (MISLRVLLVILWLQLSWVWS). Residues 23–112 (KEVEQDPGPF…DSATYLCVVN (90 aa)) form the Ig-like domain. Residue Asn-43 is glycosylated (N-linked (GlcNAc...) asparagine). Cys-44 and Cys-109 are oxidised to a cystine.

Alpha-beta TR is a heterodimer composed of an alpha and beta chain; disulfide-linked. The alpha-beta TR is associated with the transmembrane signaling CD3 coreceptor proteins to form the TR-CD3 (TcR or TCR). The assembly of alpha-beta TR heterodimers with CD3 occurs in the endoplasmic reticulum where a single alpha-beta TR heterodimer associates with one CD3D-CD3E heterodimer, one CD3G-CD3E heterodimer and one CD247 homodimer forming a stable octameric structure. CD3D-CD3E and CD3G-CD3E heterodimers preferentially associate with TR alpha and TR beta chains, respectively. The association of the CD247 homodimer is the last step of TcR assembly in the endoplasmic reticulum and is required for transport to the cell surface.

The protein resides in the cell membrane. Its function is as follows. V region of the variable domain of T cell receptor (TR) alpha chain that participates in the antigen recognition. Alpha-beta T cell receptors are antigen specific receptors which are essential to the immune response and are present on the cell surface of T lymphocytes. Recognize peptide-major histocompatibility (MH) (pMH) complexes that are displayed by antigen presenting cells (APC), a prerequisite for efficient T cell adaptive immunity against pathogens. Binding of alpha-beta TR to pMH complex initiates TR-CD3 clustering on the cell surface and intracellular activation of LCK that phosphorylates the ITAM motifs of CD3G, CD3D, CD3E and CD247 enabling the recruitment of ZAP70. In turn ZAP70 phosphorylates LAT, which recruits numerous signaling molecules to form the LAT signalosome. The LAT signalosome propagates signal branching to three major signaling pathways, the calcium, the mitogen-activated protein kinase (MAPK) kinase and the nuclear factor NF-kappa-B (NF-kB) pathways, leading to the mobilization of transcription factors that are critical for gene expression and essential for T cell growth and differentiation. The T cell repertoire is generated in the thymus, by V-(D)-J rearrangement. This repertoire is then shaped by intrathymic selection events to generate a peripheral T cell pool of self-MH restricted, non-autoaggressive T cells. Post-thymic interaction of alpha-beta TR with the pMH complexes shapes TR structural and functional avidity. This Homo sapiens (Human) protein is T cell receptor alpha variable 12-1.